Reading from the N-terminus, the 860-residue chain is Nucleolar MIF4G domain-containing protein 1 (860 aa).

Disordered stretches follow at residues 1-172 (MAAS…AARK), 191-211 (RCLG…PLSF), and 226-339 (GKNS…EKYI). Residues 1 to 269 (MAASRSAGEA…EEEEEGDVEK (269 aa)) are necessary for nucleolar localization and for targeting PPP1CA to the nucleolus. A compositionally biased stretch (basic residues) spans 20–31 (VRMKRRGGRGPR). S57 is subject to Phosphoserine. The span at 77–99 (GGRKSRKELRKEKRHLRKARRLQ) shows a compositional bias: basic residues. Residues 115–131 (GAEEASGHRQDTEERAR) are compositionally biased toward basic and acidic residues. The residue at position 139 (S139) is a Phosphoserine. Over residues 142-151 (RKPRPSRVKA) the composition is skewed to basic residues. The segment covering 152 to 169 (KATAATAKTRPSAAATAA) has biased composition (low complexity). Acidic residues-rich tracts occupy residues 249–267 (SDLE…EGDV) and 278–293 (AQSE…EQGE). Positions 307-310 (RVRF) match the Required for efficient binding to PPP1CA and for targeting PPP1CA to the nucleolus motif. A compositionally biased stretch (acidic residues) spans 312–325 (EDEEKSENSSEDGD). Phosphoserine occurs at positions 317, 320, and 321. The MIF4G domain maps to 362-559 (KKHVKGLLNR…ETMLALKNND (198 aa)). Residues 654 to 770 (DIRRNIFCTI…SLSILKVVEF (117 aa)) form the MI domain.

It belongs to the CWC22 family. As to quaternary structure, may interact with EIF4A1, EIF4A2 and EIF4A3. Interacts with PPP1CA and PPP1CC. In terms of tissue distribution, expressed in heart and skeletal muscle.

Its subcellular location is the nucleus. It is found in the nucleolus. In terms of biological role, plays a role in targeting PPP1CA to the nucleolus. The chain is Nucleolar MIF4G domain-containing protein 1 (NOM1) from Homo sapiens (Human).